The following is a 142-amino-acid chain: MIEQNETARPGDGLDWSAVLDTLPFNSDGLLPAIAQQHDSNEVLMLAWMNRQALEETLQTGRVCYYSRSRGTLWRKGESSGQVQHLHELRLDCDGDTLLLRVDQQGPACHTGRRSCFYNVLQGNRVVVSEPPQVDPQTLYGP.

Asp-92 provides a ligand contact to Mg(2+). Cys-93 serves as a coordination point for Zn(2+). 2 residues coordinate Mg(2+): Asp-94 and Asp-96. The Zn(2+) site is built by Cys-109 and Cys-116.

The protein belongs to the PRA-CH family. Homodimer. Requires Mg(2+) as cofactor. It depends on Zn(2+) as a cofactor.

The protein resides in the cytoplasm. It carries out the reaction 1-(5-phospho-beta-D-ribosyl)-5'-AMP + H2O = 1-(5-phospho-beta-D-ribosyl)-5-[(5-phospho-beta-D-ribosylamino)methylideneamino]imidazole-4-carboxamide. Its pathway is amino-acid biosynthesis; L-histidine biosynthesis; L-histidine from 5-phospho-alpha-D-ribose 1-diphosphate: step 3/9. Its function is as follows. Catalyzes the hydrolysis of the adenine ring of phosphoribosyl-AMP. This chain is Phosphoribosyl-AMP cyclohydrolase, found in Halorhodospira halophila (strain DSM 244 / SL1) (Ectothiorhodospira halophila (strain DSM 244 / SL1)).